The primary structure comprises 331 residues: Decarboxylase orsB (331 aa).

Zn(2+)-binding residues include H11, H157, and D284.

Belongs to the metallo-dependent hydrolases superfamily. ACMSD family.

Its pathway is secondary metabolite biosynthesis. In terms of biological role, decarboxylase; part of the gene cluster that mediates the biosynthesis of orsellinic acid, as well as of the cathepsin K inhibitors F9775 A and F9775 B. The non-reducing polyketide synthase orsA produces orsellinic acid by condensing acetyl-CoA with 3 malonyl-CoA units. Further modifications by the decarboxylase orsB and the tyrosinase-like protein orsC lead to the production of F9775 A and F9775 B. The functions of orsD and orsE remain unclear since only orsB and orsC are required to convert orsellinic acid into F9775 A and F9775 B. This Emericella nidulans (strain FGSC A4 / ATCC 38163 / CBS 112.46 / NRRL 194 / M139) (Aspergillus nidulans) protein is Decarboxylase orsB.